Reading from the N-terminus, the 64-residue chain is Large ribosomal subunit protein bL28 (64 aa).

Positions 1–23 (MARKDQISHRGPLSGNNRSHALN) are disordered.

This sequence belongs to the bacterial ribosomal protein bL28 family.

This is Large ribosomal subunit protein bL28 from Mesomycoplasma hyopneumoniae (strain 232) (Mycoplasma hyopneumoniae).